A 240-amino-acid chain; its full sequence is 26.7 kDa heat shock protein, chloroplastic (240 aa).

Residues 1 to 43 (MAAPFALVSRVSPAARLPIRAAWRRARPTVGLPSSGRARQLAV) constitute a chloroplast transit peptide. Positions 59-84 (HVNQDGGNQQGNAVQRRPRRSSALDG) are disordered. The 115-residue stretch at 126 to 240 (LATGEVRMPW…ERKVIDVQVQ (115 aa)) folds into the sHSP domain.

This sequence belongs to the small heat shock protein (HSP20) family. May form oligomeric structures. Expressed in roots, stems, leaves, spikelets and embryos.

It localises to the plastid. Its subcellular location is the chloroplast. The sequence is that of 26.7 kDa heat shock protein, chloroplastic (HSP26.7) from Oryza sativa subsp. japonica (Rice).